Reading from the N-terminus, the 201-residue chain is Large ribosomal subunit protein bL25 (201 aa).

This sequence belongs to the bacterial ribosomal protein bL25 family. CTC subfamily. Part of the 50S ribosomal subunit; part of the 5S rRNA/L5/L18/L25 subcomplex. Contacts the 5S rRNA. Binds to the 5S rRNA independently of L5 and L18.

This is one of the proteins that binds to the 5S RNA in the ribosome where it forms part of the central protuberance. The polypeptide is Large ribosomal subunit protein bL25 (Burkholderia multivorans (strain ATCC 17616 / 249)).